A 570-amino-acid polypeptide reads, in one-letter code: Sulfite reductase [NADPH] hemoprotein beta-component (570 aa).

C434, C440, C479, and C483 together coordinate [4Fe-4S] cluster. C483 serves as a coordination point for siroheme.

Belongs to the nitrite and sulfite reductase 4Fe-4S domain family. Alpha(8)-beta(8). The alpha component is a flavoprotein, the beta component is a hemoprotein. Siroheme is required as a cofactor. Requires [4Fe-4S] cluster as cofactor.

The enzyme catalyses hydrogen sulfide + 3 NADP(+) + 3 H2O = sulfite + 3 NADPH + 4 H(+). Its pathway is sulfur metabolism; hydrogen sulfide biosynthesis; hydrogen sulfide from sulfite (NADPH route): step 1/1. Its function is as follows. Component of the sulfite reductase complex that catalyzes the 6-electron reduction of sulfite to sulfide. This is one of several activities required for the biosynthesis of L-cysteine from sulfate. This chain is Sulfite reductase [NADPH] hemoprotein beta-component (cysI), found in Salmonella typhimurium (strain LT2 / SGSC1412 / ATCC 700720).